We begin with the raw amino-acid sequence, 397 residues long: Serpin B10 (397 aa).

A Nuclear localization signal motif is present at residues K74 to K77.

It belongs to the serpin family. Ov-serpin subfamily.

It is found in the nucleus. It localises to the cytoplasm. Functionally, protease inhibitor that may play a role in the regulation of protease activities during hematopoiesis and apoptosis induced by TNF. May regulate protease activities in the cytoplasm and in the nucleus. The protein is Serpin B10 (Serpinb10) of Mus musculus (Mouse).